The following is a 377-amino-acid chain: Flap endonuclease 1 (377 aa).

The tract at residues 1–105 (MGIKGLSQVI…GELAKRASRQ (105 aa)) is N-domain. D34 is a binding site for Mg(2+). DNA-binding residues include R47 and R71. D87 provides a ligand contact to Mg(2+). Residues 96–115 (GELAKRASRQQKAREEREEA) are disordered. The I-domain stretch occupies residues 123-254 (MVDKFAKRTV…ARAVELIRQH (132 aa)). 4 residues coordinate Mg(2+): E159, E161, D180, and D182. E159 contributes to the DNA binding site. DNA is bound by residues G232 and D234. D234 contacts Mg(2+). The tract at residues 337 to 345 (PQGRLDSFF) is interaction with PCNA. The interval 350–377 (STKKEKEKPKAAAKRKRDTKSSAPKKKR) is disordered. The segment covering 360 to 377 (AAAKRKRDTKSSAPKKKR) has biased composition (basic residues).

The protein belongs to the XPG/RAD2 endonuclease family. FEN1 subfamily. Interacts with PCNA. Three molecules of rad2 bind to one PCNA trimer with each molecule binding to one PCNA monomer. PCNA stimulates the nuclease activity without altering cleavage specificity. Mg(2+) serves as cofactor. Phosphorylated. Phosphorylation upon DNA damage induces relocalization to the nuclear plasma.

It is found in the nucleus. The protein resides in the nucleolus. It localises to the nucleoplasm. Its subcellular location is the mitochondrion. Structure-specific nuclease with 5'-flap endonuclease and 5'-3' exonuclease activities involved in DNA replication and repair. During DNA replication, cleaves the 5'-overhanging flap structure that is generated by displacement synthesis when DNA polymerase encounters the 5'-end of a downstream Okazaki fragment. It enters the flap from the 5'-end and then tracks to cleave the flap base, leaving a nick for ligation. Also involved in the long patch base excision repair (LP-BER) pathway, by cleaving within the apurinic/apyrimidinic (AP) site-terminated flap. Acts as a genome stabilization factor that prevents flaps from equilibrating into structures that lead to duplications and deletions. Also possesses 5'-3' exonuclease activity on nicked or gapped double-stranded DNA, and exhibits RNase H activity. Also involved in replication and repair of rDNA and in repairing mitochondrial DNA. The chain is Flap endonuclease 1 from Schizosaccharomyces japonicus (strain yFS275 / FY16936) (Fission yeast).